Reading from the N-terminus, the 213-residue chain is Amelotin (213 aa).

Positions 1 to 16 (MKTMILLLCLLGSAQS) are cleaved as a signal peptide. 2 disordered regions span residues 22–43 (NPAS…LPQQ) and 162–213 (GAKA…NRTQ). Polar residues predominate over residues 33 to 43 (TPGQVTPLPQQ). A compositionally biased stretch (low complexity) spans 169–180 (GTTPGHVTTPGV).

This sequence belongs to the amelotin family. In terms of processing, phosphorylated by FAM20C in vitro. O-glycosylated. In terms of tissue distribution, specifically expressed in maturation-stage ameloblasts.

The protein resides in the secreted. In terms of biological role, is a promoter of calcium phosphate mineralization, playing a critical role in the formation of the compact, mineralized, aprismatic enamel surface layer during the maturation stage of amelogenesis. This Mus musculus (Mouse) protein is Amelotin (Amtn).